The chain runs to 374 residues: Histidinol-phosphate aminotransferase (374 aa).

An N6-(pyridoxal phosphate)lysine modification is found at Lys-211. The segment covering 351–368 (GNSSQDSASKSNSSANND) has biased composition (low complexity). Residues 351-374 (GNSSQDSASKSNSSANNDELNASN) are disordered.

Belongs to the class-II pyridoxal-phosphate-dependent aminotransferase family. Histidinol-phosphate aminotransferase subfamily. As to quaternary structure, homodimer. Pyridoxal 5'-phosphate is required as a cofactor.

It carries out the reaction L-histidinol phosphate + 2-oxoglutarate = 3-(imidazol-4-yl)-2-oxopropyl phosphate + L-glutamate. It participates in amino-acid biosynthesis; L-histidine biosynthesis; L-histidine from 5-phospho-alpha-D-ribose 1-diphosphate: step 7/9. This Photobacterium profundum (strain SS9) protein is Histidinol-phosphate aminotransferase.